We begin with the raw amino-acid sequence, 167 residues long: Ubiquitin-conjugating enzyme E2 2 (167 aa).

The UBC core domain maps to 4–150 (PARRRLMRDF…VKETVEKSWE (147 aa)). The Glycyl thioester intermediate role is filled by Cys88. The tract at residues 148–167 (SWEDNMDDMDDSDEDDEDDE) is disordered. Positions 151 to 167 (DNMDDMDDSDEDDEDDE) are enriched in acidic residues.

This sequence belongs to the ubiquitin-conjugating enzyme family.

It is found in the cytoplasm. The protein resides in the nucleus. It carries out the reaction S-ubiquitinyl-[E1 ubiquitin-activating enzyme]-L-cysteine + [E2 ubiquitin-conjugating enzyme]-L-cysteine = [E1 ubiquitin-activating enzyme]-L-cysteine + S-ubiquitinyl-[E2 ubiquitin-conjugating enzyme]-L-cysteine.. The protein operates within protein modification; protein ubiquitination. Functionally, catalyzes the covalent attachment of ubiquitin to other proteins. Plays a role in transcription regulation by catalyzing the monoubiquitination of histone H2B to form H2BK123ub1. H2BK123ub1 gives a specific tag for epigenetic transcriptional activation and is also a prerequisite for H3K4me and H3K79me formation. Also involved in postreplication repair of UV-damaged DNA, in N-end rule-dependent protein degradation and in sporulation. This Candida glabrata (strain ATCC 2001 / BCRC 20586 / JCM 3761 / NBRC 0622 / NRRL Y-65 / CBS 138) (Yeast) protein is Ubiquitin-conjugating enzyme E2 2 (UBC2).